The following is a 561-amino-acid chain: MCGIWALFGSDDCLSVQCLSAMKIAHRGPDAFRFENVNGYTNCCFGFHRLAVVDPLFGMQPIRVKKYPYLWLCYNGEIYNHKKMQQHFEFEYQTKVDGEIILHLYDKGGIEQTICMLDGVFAFVLLDTANKKVFLGRDTYGVRPLFKAMTEDGFLAVCSEAKGLVTLKHSATPFLKVEPFLPGHYEVLDLKPNGKVASVEMVKYHHCRDVPLHALYDNVEKLFPGFEIETVKNNLRILFNNAVKKRLMTDRRIGCLLSGGLDSSLVAATLLKQLKEAQVQYPLQTFAIGMEDSPDLLAARKVADHIGSEHYEVLFNSEEGIQALDEVIFSLETYDITTVRASVGMYLISKYIRKNTDSVVIFSGEGSDELTQGYIYFHKAPSPEKAEEESERLLRELYLFDVLRADRTTAAHGLELRVPFLDHRFSSYYLSLPPEMRIPKNGIEKHLLRETFEDSNLIPKEILWRPKEAFSDGITSVKNSWFKILQEYVEHQVDDAMMANAAQKFPFNTPKTKEGYYYRQVFERHYPGRADWLSHYWMPKWINATDPSARTLTHYKSAVKA.

Cysteine 2 (for GATase activity) is an active-site residue. The 190-residue stretch at cysteine 2–lysine 191 folds into the Glutamine amidotransferase type-2 domain. L-glutamine contacts are provided by residues arginine 49 to valine 53, asparagine 75 to glutamate 77, and aspartate 97. Residues histidine 213–tyrosine 536 enclose the Asparagine synthetase domain. ATP contacts are provided by residues leucine 256, isoleucine 288, and serine 363–glycine 364. Lysine 385 carries the N6-acetyllysine modification. Residue threonine 545 is modified to Phosphothreonine. A Phosphoserine modification is found at serine 557.

The enzyme catalyses L-aspartate + L-glutamine + ATP + H2O = L-asparagine + L-glutamate + AMP + diphosphate + H(+). Its pathway is amino-acid biosynthesis; L-asparagine biosynthesis; L-asparagine from L-aspartate (L-Gln route): step 1/1. The polypeptide is Asparagine synthetase [glutamine-hydrolyzing] (ASNS) (Homo sapiens (Human)).